Reading from the N-terminus, the 460-residue chain is Omega-3 fatty acid desaturase, chloroplastic (460 aa).

The Histidine box-1 motif lies at 177–181 (HDCGH). A Histidine box-2 motif is present at residues 213–217 (HRTHH). The Histidine box-3 motif lies at 380-384 (HVIHH).

Belongs to the fatty acid desaturase type 1 family.

Its subcellular location is the plastid. It localises to the chloroplast membrane. It functions in the pathway lipid metabolism; polyunsaturated fatty acid biosynthesis. Chloroplast omega-3 fatty acid desaturase introduces the third double bond in the biosynthesis of 16:3 and 18:3 fatty acids, important constituents of plant membranes. It is thought to use ferredoxin as an electron donor and to act on fatty acids esterified to galactolipids, sulfolipids and phosphatidylglycerol. The polypeptide is Omega-3 fatty acid desaturase, chloroplastic (FAD7A-1) (Ricinus communis (Castor bean)).